The following is a 226-amino-acid chain: EEF1A lysine methyltransferase 3 (226 aa).

S-adenosyl-L-methionine is bound by residues Trp57, 83 to 85 (GAG), Asp104, Trp133, and Ala150.

The protein belongs to the methyltransferase superfamily. METTL21 family. Interacts with members of the heat shock protein 70 and 90 families and of the TCP-1 chaperonin family, as well as with HSPD1, STIP1 and tubulin; at least some of these proteins may be methylation substrates.

It localises to the cytoplasm. It is found in the cytoskeleton. The protein resides in the microtubule organizing center. The protein localises to the centrosome. It catalyses the reaction L-lysyl-[protein] + 3 S-adenosyl-L-methionine = N(6),N(6),N(6)-trimethyl-L-lysyl-[protein] + 3 S-adenosyl-L-homocysteine + 3 H(+). The catalysed reaction is L-lysyl-[protein] + S-adenosyl-L-methionine = N(6)-methyl-L-lysyl-[protein] + S-adenosyl-L-homocysteine + H(+). It carries out the reaction N(6)-methyl-L-lysyl-[protein] + S-adenosyl-L-methionine = N(6),N(6)-dimethyl-L-lysyl-[protein] + S-adenosyl-L-homocysteine + H(+). The enzyme catalyses N(6),N(6)-dimethyl-L-lysyl-[protein] + S-adenosyl-L-methionine = N(6),N(6),N(6)-trimethyl-L-lysyl-[protein] + S-adenosyl-L-homocysteine + H(+). Its function is as follows. Protein-lysine methyltransferase that selectively mono-, di- and trimethylates 'Lys-165' of the translation elongation factors EEF1A1 and EEF1A2 in an aminoacyl-tRNA and GTP-dependent manner. EEF1A1 methylation by EEF1AKMT3 is dynamic as well as inducible by stress conditions, such as ER-stress, and plays a regulatory role on mRNA translation. This chain is EEF1A lysine methyltransferase 3, found in Bos taurus (Bovine).